The primary structure comprises 178 residues: Cytochrome b6-f complex iron-sulfur subunit (178 aa).

Residues 20-42 form a helical membrane-spanning segment; it reads LLTFGSVTGVALGALYPVANYFI. One can recognise a Rieske domain in the interval 65–161; it reads ASGWLSSHPE…VSVENDNVFV (97 aa). The [2Fe-2S] cluster site is built by Cys107, His109, Cys125, and His128. An intrachain disulfide couples Cys112 to Cys127.

The protein belongs to the Rieske iron-sulfur protein family. The 4 large subunits of the cytochrome b6-f complex are cytochrome b6, subunit IV (17 kDa polypeptide, PetD), cytochrome f and the Rieske protein, while the 4 small subunits are PetG, PetL, PetM and PetN. The complex functions as a dimer. [2Fe-2S] cluster serves as cofactor.

It is found in the cellular thylakoid membrane. It carries out the reaction 2 oxidized [plastocyanin] + a plastoquinol + 2 H(+)(in) = 2 reduced [plastocyanin] + a plastoquinone + 4 H(+)(out). Its function is as follows. Component of the cytochrome b6-f complex, which mediates electron transfer between photosystem II (PSII) and photosystem I (PSI), cyclic electron flow around PSI, and state transitions. This Synechococcus sp. (strain CC9605) protein is Cytochrome b6-f complex iron-sulfur subunit.